A 253-amino-acid chain; its full sequence is Phosphoglycerate mutase 2 (253 aa).

Threonine 3 is modified (phosphothreonine). Substrate contacts are provided by residues 10 to 17 (RHGESTWN), 23 to 24 (CG), arginine 62, 89 to 92 (ERHY), lysine 100, and 116 to 117 (RR). The active-site Tele-phosphohistidine intermediate is histidine 11. At serine 14 the chain carries Phosphoserine. Glutamate 89 (proton donor/acceptor) is an active-site residue. Phosphoserine is present on serine 118. Phosphotyrosine occurs at positions 132 and 133. Serine 135 carries the phosphoserine modification. Position 152 is a phosphothreonine (threonine 152). A substrate-binding site is contributed by 187 to 188 (GN).

It belongs to the phosphoglycerate mutase family. BPG-dependent PGAM subfamily. As to quaternary structure, homodimer. Interacts with ENO1. Expressed in the heart and muscle. Not found in the liver and brain.

The catalysed reaction is (2R)-2-phosphoglycerate = (2R)-3-phosphoglycerate. The enzyme catalyses (2R)-3-phospho-glyceroyl phosphate = (2R)-2,3-bisphosphoglycerate + H(+). Its function is as follows. Interconversion of 3- and 2-phosphoglycerate with 2,3-bisphosphoglycerate as the primer of the reaction. Can also catalyze the reaction of EC 5.4.2.4 (synthase), but with a reduced activity. The sequence is that of Phosphoglycerate mutase 2 (PGAM2) from Homo sapiens (Human).